A 100-amino-acid chain; its full sequence is NAD(P)H-quinone oxidoreductase subunit 4L, chloroplastic (100 aa).

Helical transmembrane passes span methionine 1–isoleucine 21, methionine 31–phenylalanine 51, and isoleucine 60–leucine 80.

This sequence belongs to the complex I subunit 4L family. As to quaternary structure, NDH is composed of at least 16 different subunits, 5 of which are encoded in the nucleus.

It is found in the plastid. Its subcellular location is the chloroplast thylakoid membrane. The catalysed reaction is a plastoquinone + NADH + (n+1) H(+)(in) = a plastoquinol + NAD(+) + n H(+)(out). It carries out the reaction a plastoquinone + NADPH + (n+1) H(+)(in) = a plastoquinol + NADP(+) + n H(+)(out). NDH shuttles electrons from NAD(P)H:plastoquinone, via FMN and iron-sulfur (Fe-S) centers, to quinones in the photosynthetic chain and possibly in a chloroplast respiratory chain. The immediate electron acceptor for the enzyme in this species is believed to be plastoquinone. Couples the redox reaction to proton translocation, and thus conserves the redox energy in a proton gradient. This is NAD(P)H-quinone oxidoreductase subunit 4L, chloroplastic from Cucumis sativus (Cucumber).